A 534-amino-acid chain; its full sequence is Beta-glucosidase 31 (534 aa).

The N-terminal stretch at 1–22 is a signal peptide; it reads MAIKLIALVITLCVASWDVAQG. Q51 lines the a beta-D-glucoside pocket. N-linked (GlcNAc...) asparagine glycosylation occurs at N68. Residues H154 and 199–200 contribute to the a beta-D-glucoside site; that span reads NE. E200 (proton donor) is an active-site residue. C219 and C227 are oxidised to a cystine. Residue Y344 coordinates a beta-D-glucoside. N-linked (GlcNAc...) asparagine glycosylation is present at N374. Residue E417 participates in a beta-D-glucoside binding. E417 serves as the catalytic Nucleophile. An N-linked (GlcNAc...) asparagine glycan is attached at N425. A beta-D-glucoside-binding positions include W467, 474-475, and F483; that span reads EW.

This sequence belongs to the glycosyl hydrolase 1 family.

The catalysed reaction is Hydrolysis of terminal, non-reducing beta-D-glucosyl residues with release of beta-D-glucose.. This is Beta-glucosidase 31 from Arabidopsis thaliana (Mouse-ear cress).